We begin with the raw amino-acid sequence, 751 residues long: Proton-associated sugar transporter A (751 aa).

The next 6 helical transmembrane spans lie at 93–113 (ILFGIEFSYAMETAYVTPVLL), 123–143 (SLVWFISPILGFLLQPLLGAW), 155–175 (RPFILVLAIGALLGLSLLLNG), 191–211 (WGILLTVCGVVLMDFSADSAD), 233–253 (IHALMAGLGGGFGYVVGGIHW), and 268–288 (VIYVFTAITLSVTTVLTLISI). Thr500 bears the Phosphothreonine mark. The next 6 membrane-spanning stretches (helical) occupy residues 536–556 (GWLSFEGMLLFYTDFMGEVVF), 576–596 (VTMGCWGMCIYAFSAAFYSAI), 606–626 (VRTLYFIAYLAFGLGTGLATL), 630–650 (LYVVLSLCTTYGILFSTLCTL), 688–708 (FLAQILVSLVLGPLTSAVGSA), and 710–730 (GVMYFSSLVSFLGCLYSSLCV).

Belongs to the glycoside-pentoside-hexuronide (GPH) cation symporter transporter (TC 2.A.2) family.

It is found in the membrane. It catalyses the reaction D-galactose(in) + H(+)(in) = D-galactose(out) + H(+)(out). The catalysed reaction is D-glucose(out) + H(+)(out) = D-glucose(in) + H(+)(in). Functionally, proton-associated glucose transporter in the brain. This is Proton-associated sugar transporter A from Mus musculus (Mouse).